A 219-amino-acid polypeptide reads, in one-letter code: MPRKAGSVEEAEAGAEEVGAEEVGPEESGGEESGAEESGPEESDPEEPGAAAEMEAGQPRPVLRSVNSCEPSQVIFCNRSPRVVLPVWLNFDGEPQPYPTLPPGTGRRIHSYRGHLWLFRDAGTYDGLLVNQTELFVPSLNVDGQPIFANITLPVYTLKERCLQVVRSLVKPENYRRLDIVRSLYEDLEDHPNVRKDLERLAQEHIENQRMEGETEDFN.

The segment at 1–57 is disordered; it reads MPRKAGSVEEAEAGAEEVGAEEVGPEESGGEESGAEESGPEESDPEEPGAAAEMEAG. Residues 9–47 show a composition bias toward acidic residues; that stretch reads EEAEAGAEEVGAEEVGPEESGGEESGAEESGPEESDPEE. The span at 48–57 shows a compositional bias: low complexity; that stretch reads PGAAAEMEAG. Positions 157-166 are interaction with Elongin BC complex; sequence TLKERCLQVV.

The protein belongs to the VHL family. As to quaternary structure, component of the VBC (VHL-Elongin BC-CUL2) complex; this complex acts as a ubiquitin-ligase E3 and directs proteasome-dependent degradation of targeted proteins. Interacts with CUL2; this interaction is dependent on the integrity of the trimeric VBC complex. Interacts (via the beta domain) with HIF1A (via the NTAD domain); this interaction mediates degradation of HIF1A in normoxia and, in hypoxia, prevents ubiquitination and degradation of HIF1A by mediating hypoxia-induced translocation to the nucleus, a process which requires a hypoxia-dependent regulatory signal. Interacts with ADRB2; the interaction, in normoxia, is dependent on hydroxylation of ADRB2 and the subsequent VCB-mediated ubiquitination and degradation of ADRB2. Under hypoxia, hydroxylation, interaction with VHL, ubiquitination and subsequent degradation of ADRB2 are dramatically decreased. Interacts with RNF139, USP33 and JADE1. Found in a complex composed of LIMD1, VHL, EGLN1/PHD2, ELOB and CUL2. Interacts with LIMD1 (via LIM zinc-binding 2). Interacts with AJUBA (via LIM domains) and WTIP (via LIM domains). Interacts with EPAS1. Interacts with CARD9. Interacts with DCUN1D1 independently of CUL2; this interaction engages DCUN1D1 in the VCB complex and triggers CUL2 neddylation and consequently cullin ring ligase (CRL) substrates polyubiquitylation. Interacts with ALAS1 (hydroxylated form). Interacts with IGFBP1.

The protein resides in the cytoplasm. The protein localises to the cell membrane. Its subcellular location is the endoplasmic reticulum. It is found in the nucleus. It functions in the pathway protein modification; protein ubiquitination. Involved in the ubiquitination and subsequent proteasomal degradation via the von Hippel-Lindau ubiquitination complex. Seems to act as a target recruitment subunit in the E3 ubiquitin ligase complex and recruits hydroxylated hypoxia-inducible factor (HIF) under normoxic conditions. Involved in transcriptional repression through interaction with HIF1A, HIF1AN and histone deacetylases. Ubiquitinates, in an oxygen-responsive manner, ADRB2. Acts as a negative regulator of mTORC1 by promoting ubiquitination and degradation of RPTOR. This chain is von Hippel-Lindau disease tumor suppressor (VHL), found in Canis lupus familiaris (Dog).